The chain runs to 124 residues: Small ribosomal subunit protein uS12 (124 aa).

Aspartate 89 carries the post-translational modification 3-methylthioaspartic acid.

It belongs to the universal ribosomal protein uS12 family. As to quaternary structure, part of the 30S ribosomal subunit. Contacts proteins S8 and S17. May interact with IF1 in the 30S initiation complex.

In terms of biological role, with S4 and S5 plays an important role in translational accuracy. Functionally, interacts with and stabilizes bases of the 16S rRNA that are involved in tRNA selection in the A site and with the mRNA backbone. Located at the interface of the 30S and 50S subunits, it traverses the body of the 30S subunit contacting proteins on the other side and probably holding the rRNA structure together. The combined cluster of proteins S8, S12 and S17 appears to hold together the shoulder and platform of the 30S subunit. The polypeptide is Small ribosomal subunit protein uS12 (Shewanella oneidensis (strain ATCC 700550 / JCM 31522 / CIP 106686 / LMG 19005 / NCIMB 14063 / MR-1)).